The chain runs to 753 residues: Glycerophosphodiester phosphodiesterase GDPDL6 (753 aa).

The first 17 residues, 1-17 (MLRFFILFSLFLHSSVA), serve as a signal peptide directing secretion. GP-PDE domains follow at residues 41–339 (PAVV…SQSI) and 355–654 (ALVI…TRYL). N-linked (GlcNAc...) asparagine glycans are attached at residues Asn304, Asn516, Asn603, and Asn715. Positions 707–729 (PPVAKLASNGTEGGPPQTPPRSG) are disordered. A helical membrane pass occupies residues 731-751 (VAIAANLSLSLLAMMALGLLY).

The protein belongs to the glycerophosphoryl diester phosphodiesterase family. Expressed in flowers and siliques.

The protein resides in the membrane. It catalyses the reaction a sn-glycero-3-phosphodiester + H2O = an alcohol + sn-glycerol 3-phosphate + H(+). The sequence is that of Glycerophosphodiester phosphodiesterase GDPDL6 from Arabidopsis thaliana (Mouse-ear cress).